Consider the following 1008-residue polypeptide: PAN2-PAN3 deadenylation complex catalytic subunit PAN2 (1008 aa).

WD repeat units lie at residues 29-68 (GQLT…PYSR), 110-149 (PSLG…VTRV), 158-198 (HMAG…FSDV), 200-236 (VQDN…AMAP), and 277-316 (AEVA…SFAE). The interval 314–449 (FAEFSAPTAF…TCTEASMSSK (136 aa)) is linker. Residues 450–755 (KVPRLYRKLE…RTVMMVYAVG (306 aa)) enclose the USP domain. The Exonuclease domain occupies 808–976 (AIDAEFVVLK…EDSHTALLLY (169 aa)). The a divalent metal cation site is built by Asp-810, Glu-812, Asp-915, and Asp-968.

This sequence belongs to the peptidase C19 family. PAN2 subfamily. Forms a heterotrimer with an asymmetric homodimer of the regulatory subunit PAN3 to form the poly(A)-nuclease (PAN) deadenylation complex. A divalent metal cation serves as cofactor.

It localises to the cytoplasm. The catalysed reaction is Exonucleolytic cleavage of poly(A) to 5'-AMP.. Its activity is regulated as follows. Positively regulated by the regulatory subunit PAN3. Functionally, catalytic subunit of the poly(A)-nuclease (PAN) deadenylation complex, one of two cytoplasmic mRNA deadenylases involved in mRNA turnover. PAN specifically shortens poly(A) tails of RNA and the activity is stimulated by poly(A)-binding protein PAB1. PAN deadenylation is followed by rapid degradation of the shortened mRNA tails by the CCR4-NOT complex. Deadenylated mRNAs are then degraded by two alternative mechanisms, namely exosome-mediated 3'-5' exonucleolytic degradation, or deadenylation-dependent mRNA decaping and subsequent 5'-3' exonucleolytic degradation by XRN1. May also be involved in post-transcriptional maturation of mRNA poly(A) tails. The sequence is that of PAN2-PAN3 deadenylation complex catalytic subunit PAN2 from Yarrowia lipolytica (strain CLIB 122 / E 150) (Yeast).